The following is a 473-amino-acid chain: ATP synthase subunit beta (473 aa).

An ATP-binding site is contributed by 158–165 (GGAGVGKT).

Belongs to the ATPase alpha/beta chains family. F-type ATPases have 2 components, CF(1) - the catalytic core - and CF(0) - the membrane proton channel. CF(1) has five subunits: alpha(3), beta(3), gamma(1), delta(1), epsilon(1). CF(0) has three main subunits: a(1), b(2) and c(9-12). The alpha and beta chains form an alternating ring which encloses part of the gamma chain. CF(1) is attached to CF(0) by a central stalk formed by the gamma and epsilon chains, while a peripheral stalk is formed by the delta and b chains.

The protein localises to the cell membrane. The catalysed reaction is ATP + H2O + 4 H(+)(in) = ADP + phosphate + 5 H(+)(out). Functionally, produces ATP from ADP in the presence of a proton gradient across the membrane. The catalytic sites are hosted primarily by the beta subunits. This Bacillus sp. (strain PS3) protein is ATP synthase subunit beta.